The primary structure comprises 640 residues: Threonine--tRNA ligase (640 aa).

The region spanning 1 to 61 (MPIITLPDGN…EKDSEVNIIT (61 aa)) is the TGS domain. The tract at residues 242–533 (DHRRIAKQMS…LIEHYAGRMP (292 aa)) is catalytic. Positions 333, 384, and 510 each coordinate Zn(2+).

The protein belongs to the class-II aminoacyl-tRNA synthetase family. Homodimer. Zn(2+) is required as a cofactor.

Its subcellular location is the cytoplasm. The enzyme catalyses tRNA(Thr) + L-threonine + ATP = L-threonyl-tRNA(Thr) + AMP + diphosphate + H(+). In terms of biological role, catalyzes the attachment of threonine to tRNA(Thr) in a two-step reaction: L-threonine is first activated by ATP to form Thr-AMP and then transferred to the acceptor end of tRNA(Thr). Also edits incorrectly charged L-seryl-tRNA(Thr). This is Threonine--tRNA ligase from Prochlorococcus marinus (strain MIT 9303).